Here is an 818-residue protein sequence, read N- to C-terminus: Elongation factor G, mitochondrial (818 aa).

Residues 1-23 (MFLGRAASRTCRHSQPLRVAARA) constitute a mitochondrion transit peptide. The disordered stretch occupies residues 67-96 (MASTATATKPTEEASSSDQPPAPAHKLTDN). Residues 69 to 85 (STATATKPTEEASSSDQ) show a composition bias toward polar residues. The 289-residue stretch at 102–390 (TFQRNIGISA…GVCEYLPNPS (289 aa)) folds into the tr-type G domain. GTP contacts are provided by residues 111–118 (AHIDSGKT), 188–192 (DTPGH), and 242–245 (NKMD).

The protein belongs to the TRAFAC class translation factor GTPase superfamily. Classic translation factor GTPase family. EF-G/EF-2 subfamily.

Its subcellular location is the mitochondrion. The protein operates within protein biosynthesis; polypeptide chain elongation. Functionally, mitochondrial GTPase that catalyzes the GTP-dependent ribosomal translocation step during translation elongation. During this step, the ribosome changes from the pre-translocational (PRE) to the post-translocational (POST) state as the newly formed A-site-bound peptidyl-tRNA and P-site-bound deacylated tRNA move to the P and E sites, respectively. Catalyzes the coordinated movement of the two tRNA molecules, the mRNA and conformational changes in the ribosome. This is Elongation factor G, mitochondrial from Coprinopsis cinerea (strain Okayama-7 / 130 / ATCC MYA-4618 / FGSC 9003) (Inky cap fungus).